A 466-amino-acid polypeptide reads, in one-letter code: L-seryl-tRNA(Sec) selenium transferase (466 aa).

At Lys-294 the chain carries N6-(pyridoxal phosphate)lysine.

Belongs to the SelA family. The cofactor is pyridoxal 5'-phosphate.

Its subcellular location is the cytoplasm. The catalysed reaction is L-seryl-tRNA(Sec) + selenophosphate + H(+) = L-selenocysteinyl-tRNA(Sec) + phosphate. It functions in the pathway aminoacyl-tRNA biosynthesis; selenocysteinyl-tRNA(Sec) biosynthesis; selenocysteinyl-tRNA(Sec) from L-seryl-tRNA(Sec) (bacterial route): step 1/1. Converts seryl-tRNA(Sec) to selenocysteinyl-tRNA(Sec) required for selenoprotein biosynthesis. The protein is L-seryl-tRNA(Sec) selenium transferase of Carboxydothermus hydrogenoformans (strain ATCC BAA-161 / DSM 6008 / Z-2901).